A 152-amino-acid polypeptide reads, in one-letter code: Ribonuclease H (152 aa).

One can recognise an RNase H type-1 domain in the interval 1-142; the sequence is MKEVTIYTDG…CDELARAAIA (142 aa). D9, E47, D69, and D134 together coordinate Mg(2+).

It belongs to the RNase H family. In terms of assembly, monomer. It depends on Mg(2+) as a cofactor.

It localises to the cytoplasm. The enzyme catalyses Endonucleolytic cleavage to 5'-phosphomonoester.. Its function is as follows. Endonuclease that specifically degrades the RNA of RNA-DNA hybrids. In Moorella thermoacetica (strain ATCC 39073 / JCM 9320), this protein is Ribonuclease H.